The following is a 31-amino-acid chain: Cytochrome b6-f complex subunit 6 (31 aa).

Residues 4 to 24 form a helical membrane-spanning segment; it reads VIAYLGLLASVLIGTIVIYLG.

Belongs to the PetL family. The 4 large subunits of the cytochrome b6-f complex are cytochrome b6, subunit IV (17 kDa polypeptide, PetD), cytochrome f and the Rieske protein, while the 4 small subunits are PetG, PetL, PetM and PetN. The complex functions as a dimer.

The protein resides in the plastid. It localises to the chloroplast thylakoid membrane. Functionally, component of the cytochrome b6-f complex, which mediates electron transfer between photosystem II (PSII) and photosystem I (PSI), cyclic electron flow around PSI, and state transitions. PetL is important for photoautotrophic growth as well as for electron transfer efficiency and stability of the cytochrome b6-f complex. This chain is Cytochrome b6-f complex subunit 6, found in Oltmannsiellopsis viridis (Marine flagellate).